The chain runs to 76 residues: Conotoxin Cal5a L3 (76 aa).

The N-terminal stretch at 1–22 (MRFYIGLMAALMLTSVLRTDSA) is a signal peptide. Residues 23–42 (SVGQTGTKSELAVIERVIRQ) constitute a propeptide that is removed on maturation. The residue at position 50 (Pro-50) is a 4-hydroxyproline. Pro-58, Pro-62, and Pro-64 each carry 4-hydroxyproline; partial.

It belongs to the conotoxin T superfamily. Post-translationally, contains 2 disulfide bonds that can be either 'C1-C3, C2-C4' or 'C1-C4, C2-C3', since these disulfide connectivities have been observed for conotoxins with cysteine framework V (for examples, see AC P0DQQ7 and AC P81755). Expressed by the venom duct.

It is found in the secreted. Its function is as follows. Probable neurotoxin with unknown target. Possibly targets ion channels. The polypeptide is Conotoxin Cal5a L3 (Californiconus californicus (California cone)).